The primary structure comprises 234 residues: uncharacterized protein (234 aa).

The next 2 membrane-spanning stretches (helical) occupy residues 20–40 (LILL…FKVI) and 176–196 (VMAF…LHFL).

This sequence belongs to the CpsC/CapA family.

The protein resides in the cell membrane. This is an uncharacterized protein from Bacillus subtilis (strain 168).